The following is a 631-amino-acid chain: MGFSPSSSWFLHPQLHHVVSKMSYFDAFLFYIVHLVDKLGLWHRFPVLLGVAYLGLRRHLHQRYNLVHVGPINGQGYDTDEFCYRTADGKCNHPSDNTIGSQGSFIGRNMPPSTSQYGILDPHPSVVATKLLARKRFIDNGDQFNVIACSWIQFMIHDWVDHLEDTHQIELEAPEEVASGCPLKSFKFLRTKKVPTDDHHKSGAVNTRTPWWDGSVIYGNDETGMRRVRVFKDGKLKISGDGLLERDERGVPISGDIRNSWSGFSLLQALFVKEHNSVCDMLKERYPDFDDEKLYRTARLVTAAVIAKVHTIDWTIELLKTDTLTAGMRINWYGFFGKKVKDMVGARFGPLFSGLVGLKKPNDHGVPYSLTEEFVSVYRMHCLLPETLILRDMNSENVDKENPAIEREIPMTELIGKKAGEKASKLGFEQLLVSMGHQSCGALTLWNYPNWMRNLVAQDIDGEDRPHLIDMAALEIYRDRERGVPRYNEFRKNLLMSPISKWEELTDDEEAIKVLREVYEDDIEKLDLNVGLHAEKKIKGFAISETAFFIFLLVASRRLEADRFFTTNFNEKTYTKEGLEWVNTTETLKDVIDRHFPRLTDQWMRCSSAFSVWGSDPNPKNWVPLYLRSAP.

The N-terminal stretch at 1–20 is a signal peptide; sequence MGFSPSSSWFLHPQLHHVVS. Heme b is bound at residue H157. Y378 acts as the Proton acceptor in catalysis. A heme b-binding site is contributed by H381. An N-linked (GlcNAc...) asparagine glycan is attached at N583.

This sequence belongs to the peroxidase family. It depends on heme b as a cofactor. As to expression, expressed in seedlings (cotyledons, young leaves, and hypocotyls), flowers, siliques and old leaves.

Alpha-dioxygenase that catalyzes the primary oxygenation of fatty acids into oxylipins. May be involved in the senescence process. This chain is Alpha-dioxygenase 2 (DOX2), found in Arabidopsis thaliana (Mouse-ear cress).